Consider the following 146-residue polypeptide: Hemoglobin subunit beta-2 (146 aa).

The 145-residue stretch at 2-146 folds into the Globin domain; sequence EWTNFERATI…VVSSLGKQYH (145 aa). Residues His-63 and His-92 each contribute to the heme b site.

This sequence belongs to the globin family. Hb2 is a heterotetramer of two alpha chains and two beta-2 chains. Red blood cells.

Its function is as follows. Involved in oxygen transport from gills to the various peripheral tissues. The polypeptide is Hemoglobin subunit beta-2 (hbb2) (Cygnodraco mawsoni (Antarctic dragonfish)).